A 248-amino-acid chain; its full sequence is Probable aquaporin TIP2-1 (248 aa).

The next 2 membrane-spanning stretches (helical) occupy residues 20–40 (AYVA…GSAI) and 54–74 (AGLV…VSVA). The short motif at 83–85 (NPA) is the NPA 1 element. Helical transmembrane passes span 97–119 (TILT…CLLL), 141–161 (GVVM…ATAA), and 168–188 (LGTI…LAAG). The NPA 2 signature appears at 196 to 198 (NPA). Residues 217–237 (WVGPLIGGGLAGLVYGDVFIG) traverse the membrane as a helical segment.

Belongs to the MIP/aquaporin (TC 1.A.8) family. TIP (TC 1.A.8.10) subfamily. Expressed in roots and anthers.

The protein resides in the vacuole membrane. Its function is as follows. Aquaporins facilitate the transport of water and small neutral solutes across cell membranes. May be involved in transport from the vacuolar compartment to the cytoplasm. The polypeptide is Probable aquaporin TIP2-1 (TIP2-1) (Oryza sativa subsp. japonica (Rice)).